A 279-amino-acid chain; its full sequence is MAFNSQPIEGWHGKLDLVYADRSNSTQLIYNHQQAPLKVQRPFYPEGEKVCHSVILHTAGGVVGGDRLSYNLHLQPNAQALITTAAAGKIYRSEGLQARQTIDIKIDAGACLEWLPQETILFNGAIYRQDLRVELATGANFLGWEITRFGRSARGEKFYQGEWRSHTEIWRQGVPLWIDRQWLPGNEAVFHSPHGLAGQPIVGSLVWLGSAVSTEIIAKARNLGNTQGEKGVTSLENGFLCRYRGASTSEVRNWFTDVWQLLRVEFFSRSKCTPRVWQT.

The protein belongs to the UreD family. In terms of assembly, ureD, UreF and UreG form a complex that acts as a GTP-hydrolysis-dependent molecular chaperone, activating the urease apoprotein by helping to assemble the nickel containing metallocenter of UreC. The UreE protein probably delivers the nickel.

It is found in the cytoplasm. Required for maturation of urease via the functional incorporation of the urease nickel metallocenter. The protein is Urease accessory protein UreD of Trichormus variabilis (strain ATCC 29413 / PCC 7937) (Anabaena variabilis).